The following is a 507-amino-acid chain: Histidine ammonia-lyase (507 aa).

Positions 141-143 (ASG) form a cross-link, 5-imidazolinone (Ala-Gly). At S142 the chain carries 2,3-didehydroalanine (Ser).

It belongs to the PAL/histidase family. In terms of processing, contains an active site 4-methylidene-imidazol-5-one (MIO), which is formed autocatalytically by cyclization and dehydration of residues Ala-Ser-Gly.

The protein resides in the cytoplasm. It carries out the reaction L-histidine = trans-urocanate + NH4(+). It functions in the pathway amino-acid degradation; L-histidine degradation into L-glutamate; N-formimidoyl-L-glutamate from L-histidine: step 1/3. The polypeptide is Histidine ammonia-lyase (Burkholderia ambifaria (strain MC40-6)).